The chain runs to 272 residues: HMP-PP phosphatase (272 aa).

Residue D8 is the Nucleophile of the active site. Positions 8, 10, and 212 each coordinate Mg(2+).

This sequence belongs to the HAD-like hydrolase superfamily. Cof family. The cofactor is Mg(2+).

It carries out the reaction 4-amino-2-methyl-5-(diphosphooxymethyl)pyrimidine + H2O = 4-amino-2-methyl-5-(phosphooxymethyl)pyrimidine + phosphate + H(+). In terms of biological role, catalyzes the hydrolysis of 4-amino-2-methyl-5-hydroxymethylpyrimidine pyrophosphate (HMP-PP) to 4-amino-2-methyl-5-hydroxymethylpyrimidine phosphate (HMP-P). The sequence is that of HMP-PP phosphatase from Escherichia coli (strain K12 / MC4100 / BW2952).